Here is a 218-residue protein sequence, read N- to C-terminus: Capsid protein (218 aa).

M1 is subject to N-acetylmethionine; by host. The segment at 1-30 (MDKSESTSAGRNRRRRPRRGSRSAPSSSDA) is disordered. The span at 11–21 (RNRRRRPRRGS) shows a compositional bias: basic residues.

The protein belongs to the cucumovirus capsid protein family.

Its subcellular location is the virion. In terms of biological role, capsid protein. Probably binds RNA and plays a role in packaging. The protein is Capsid protein of Cucumis sativus (Cucumber).